Reading from the N-terminus, the 437-residue chain is tRNA wybutosine-synthesizing protein 2 homolog (437 aa).

Residues serine 208, lysine 215, glutamate 255, and 283-284 (DN) contribute to the S-adenosyl-L-methionine site. Polar residues predominate over residues 331-344 (SFSGKNPQPPGSSN). A disordered region spans residues 331–374 (SFSGKNPQPPGSSNMEKKHWPHPQKITTDKQGNRTTGSCMGEMS).

It belongs to the class I-like SAM-binding methyltransferase superfamily. TRM5/TYW2 family.

The enzyme catalyses 4-demethylwyosine(37) in tRNA(Phe) + S-adenosyl-L-methionine = 4-demethyl-7-[(3S)-3-amino-3-carboxypropyl]wyosine(37) in tRNA(Phe) + S-methyl-5'-thioadenosine + H(+). It functions in the pathway tRNA modification; wybutosine-tRNA(Phe) biosynthesis. S-adenosyl-L-methionine-dependent transferase that acts as a component of the wybutosine biosynthesis pathway. Wybutosine is a hyper modified guanosine with a tricyclic base found at the 3'-position adjacent to the anticodon of eukaryotic phenylalanine tRNA. Catalyzes the transfer of the alpha-amino-alpha-carboxypropyl (acp) group from S-adenosyl-L-methionine to the C-7 position of 4-demethylwyosine (imG-14) to produce wybutosine-86. This Rattus norvegicus (Rat) protein is tRNA wybutosine-synthesizing protein 2 homolog (Trmt12).